Reading from the N-terminus, the 690-residue chain is Probable xyloglucan glycosyltransferase 1 (690 aa).

2 consecutive transmembrane segments (helical) span residues alanine 120 to tryptophan 140 and leucine 166 to isoleucine 186. Aspartate 272 is an active-site residue. Aspartate 331 and aspartate 333 together coordinate substrate. The active site involves aspartate 425. 2 helical membrane-spanning segments follow: residues leucine 503–valine 523 and leucine 528–alanine 548. Residues glutamine 607 to histidine 637 form a disordered region. The next 2 membrane-spanning stretches (helical) occupy residues isoleucine 640 to leucine 659 and isoleucine 665 to isoleucine 685.

The protein belongs to the glycosyltransferase 2 family. Plant cellulose synthase-like C subfamily.

It localises to the golgi apparatus membrane. Probable beta-1,4-glucan synthase rather involved in the synthesis of the xyloglucan backbone than cellulose. Seems to work simultaneously with xyloglucan 6-xylosyltransferase. Xyloglucan is a noncellulosic polysaccharides of plant cell wall and consists of a glucan backbone substituted by xylose, galactose and fucose. The polypeptide is Probable xyloglucan glycosyltransferase 1 (CSLC1) (Oryza sativa subsp. japonica (Rice)).